The sequence spans 1080 residues: DNA-directed RNA polymerase subunit beta C-terminal section (1080 aa).

Belongs to the RNA polymerase beta chain family. In plastids the minimal PEP RNA polymerase catalytic core is composed of four subunits: alpha, beta, beta', and beta''. When a (nuclear-encoded) sigma factor is associated with the core the holoenzyme is formed, which can initiate transcription.

Its subcellular location is the plastid. The protein localises to the chloroplast. The enzyme catalyses RNA(n) + a ribonucleoside 5'-triphosphate = RNA(n+1) + diphosphate. DNA-dependent RNA polymerase catalyzes the transcription of DNA into RNA using the four ribonucleoside triphosphates as substrates. The polypeptide is DNA-directed RNA polymerase subunit beta C-terminal section (rpoB2) (Stigeoclonium helveticum (Green alga)).